We begin with the raw amino-acid sequence, 486 residues long: Malonate-semialdehyde dehydrogenase (486 aa).

The NAD(+) site is built by Phe-154, Lys-178, Glu-181, Arg-182, and Ser-231. Cys-286 (nucleophile) is an active-site residue. Glu-386 provides a ligand contact to NAD(+).

It belongs to the aldehyde dehydrogenase family. IolA subfamily. Homotetramer.

The catalysed reaction is 3-oxopropanoate + NAD(+) + CoA + H2O = hydrogencarbonate + acetyl-CoA + NADH + H(+). It catalyses the reaction 2-methyl-3-oxopropanoate + NAD(+) + CoA + H2O = propanoyl-CoA + hydrogencarbonate + NADH + H(+). It functions in the pathway polyol metabolism; myo-inositol degradation into acetyl-CoA; acetyl-CoA from myo-inositol: step 7/7. In terms of biological role, catalyzes the oxidation of malonate semialdehyde (MSA) and methylmalonate semialdehyde (MMSA) into acetyl-CoA and propanoyl-CoA, respectively. Is involved in a myo-inositol catabolic pathway. Bicarbonate, and not CO2, is the end-product of the enzymatic reaction. This chain is Malonate-semialdehyde dehydrogenase, found in Bacillus cereus (strain AH187).